The primary structure comprises 425 residues: MSTIIDIHAREILDSRGNPTVEVDVVLEDGTMGRAAVPSGASTGAYEAVERRDGDKSRYMGKGVLEAVAAVNGEIAEELVGFDATEQVAIDAAMIELDGTENKGRLGANAILGVSLAVAKAAADFTAQPLYRYVGGTSARVLPVPMMNIINGGEHADNPIDIQEFMIMPVAAEDIRDAVRMGAEVFHTLKKELSAAGLSTGIGDEGGFAPNIASTREALDFVLKSIEKAGYKPGEDIYLALDCAATEYFKDGKYVLSGEGKTLSSDENVDYLAALVADYPIISIEDGMAEDDWAGWKALTDRLGGKVQLVGDDLFVTNPARLAEGITRGCANSMLVKVNQIGSLTETLKAVDMAHRARYTNVMSHRSGETEDATIADLAVATNCGQIKTGSLARSDRLAKYNQLIRIEEALGEVAEYAGRSILRG.

Gln163 lines the (2R)-2-phosphoglycerate pocket. Residue Glu205 is the Proton donor of the active site. The Mg(2+) site is built by Asp242, Glu285, and Asp312. Positions 337, 366, 367, and 388 each coordinate (2R)-2-phosphoglycerate. Residue Lys337 is the Proton acceptor of the active site.

The protein belongs to the enolase family. Mg(2+) serves as cofactor.

It is found in the cytoplasm. The protein resides in the secreted. The protein localises to the cell surface. It carries out the reaction (2R)-2-phosphoglycerate = phosphoenolpyruvate + H2O. Its pathway is carbohydrate degradation; glycolysis; pyruvate from D-glyceraldehyde 3-phosphate: step 4/5. Catalyzes the reversible conversion of 2-phosphoglycerate (2-PG) into phosphoenolpyruvate (PEP). It is essential for the degradation of carbohydrates via glycolysis. The polypeptide is Enolase (Ruegeria pomeroyi (strain ATCC 700808 / DSM 15171 / DSS-3) (Silicibacter pomeroyi)).